A 925-amino-acid polypeptide reads, in one-letter code: Serine/threonine-protein kinase PLK4 (925 aa).

In terms of domain architecture, Protein kinase spans 12 to 265 (FKVGNLLGKG…LSSVLDHPFM (254 aa)). Residues 18–26 (LGKGSFAGV) and K41 contribute to the ATP site. 2 positions are modified to N6-acetyllysine: K45 and K46. The active-site Proton acceptor is D136. Disordered regions lie at residues 262–283 (HPFM…EDSM) and 328–394 (KNSS…KTYS). Residues 330–341 (SSDFSSGDGSNF) show a composition bias toward low complexity. Residues 342-353 (CTQWGNPEQEAN) show a composition bias toward polar residues. A compositionally biased stretch (basic and acidic residues) spans 359–369 (RVIEDAEERPH). The span at 381 to 391 (RASPSNQSRAK) shows a compositional bias: polar residues. Phosphoserine is present on S400. A disordered region spans residues 517–538 (EVMPQEPGLHPHSEQSKNRSME). Basic and acidic residues predominate over residues 525–536 (LHPHSEQSKNRS). One can recognise a Cryptic POLO box 1 (CPB1) domain in the interval 547-660 (TLRSITSPLI…SRFIQLVRSK (114 aa)). The region spanning 661 to 774 (TPKITYFTRY…GRKPGNTSSP (114 aa)) is the Cryptic POLO box 2 (CPB2) domain. Phosphoserine is present on S778. A POLO box domain is found at 841–919 (QLLKSVFVKN…LSSILLMFSN (79 aa)).

Belongs to the protein kinase superfamily. Ser/Thr protein kinase family. CDC5/Polo subfamily. Homodimer. Interacts with CEP152 (via N-terminus). Interacts with CEP78; this interaction may be important for proper PLK4 localization to the centriole and PLK4-induced overduplication of centrioles. Interacts with CEP131. Interacts simultaneously with TENT5C and CEP192. Interacts with TENT5C; this interaction leads to the TENT5C recruitment in the centrosome. Interacts with CEP85; this interaction may be important in cell migration and centriole assembly. Post-translationally, ubiquitinated; leading to its degradation by the proteasome. Deubiquitinated by USP54; leading to PLK4 stabilization. In terms of processing, tyrosine-phosphorylated by TEC. Acetylation by KAT2A and KAT2B impairs kinase activity by shifting the kinase to an inactive conformation. In terms of tissue distribution, expressed in tissues associated with mitotic and meiotic cell division. Highly expressed in testis.

The protein resides in the cytoplasm. Its subcellular location is the cytoskeleton. It localises to the microtubule organizing center. It is found in the centrosome. The protein localises to the centriole. The protein resides in the nucleus. Its subcellular location is the nucleolus. It localises to the cleavage furrow. It catalyses the reaction L-seryl-[protein] + ATP = O-phospho-L-seryl-[protein] + ADP + H(+). The enzyme catalyses L-threonyl-[protein] + ATP = O-phospho-L-threonyl-[protein] + ADP + H(+). Serine/threonine-protein kinase that plays a central role in centriole duplication. Able to trigger procentriole formation on the surface of the parental centriole cylinder, leading to the recruitment of centriole biogenesis proteins such as SASS6, CPAP, CCP110, CEP135 and gamma-tubulin. When overexpressed, it is able to induce centrosome amplification through the simultaneous generation of multiple procentrioles adjoining each parental centriole during S phase. Phosphorylates 'Ser-151' of FBXW5 during the G1/S transition, leading to inhibit FBXW5 ability to ubiquitinate SASS6. Its central role in centriole replication suggests a possible role in tumorigenesis, centrosome aberrations being frequently observed in tumors. Phosphorylates CDC25C and CHEK2. Also involved in deuterosome-mediated centriole amplification in multiciliated that can generate more than 100 centrioles. Also involved in trophoblast differentiation by phosphorylating HAND1, leading to disrupt the interaction between HAND1 and MDFIC and activate HAND1. Required for the recruitment of STIL to the centriole and for STIL-mediated centriole amplification. Phosphorylates CEP131 at 'Ser-78' and PCM1 at 'Ser-372' which is essential for proper organization and integrity of centriolar satellites. This is Serine/threonine-protein kinase PLK4 from Mus musculus (Mouse).